Reading from the N-terminus, the 163-residue chain is Probable ribosome biogenesis protein RLP24 (163 aa).

The protein belongs to the eukaryotic ribosomal protein eL24 family. Associated with nucleolar and cytoplasmic pre-60S particles. At the end of biogenesis it dissociates from cytoplasmic pre-60S particles and is likely to be exchanged for its ribosomal homolog, RPL24.

The protein localises to the nucleus. It localises to the nucleolus. In terms of biological role, involved in the biogenesis of the 60S ribosomal subunit. Ensures the docking of GTPBP4/NOG1 to pre-60S particles. This is Probable ribosome biogenesis protein RLP24 (RSL24D1) from Bos taurus (Bovine).